Here is a 647-residue protein sequence, read N- to C-terminus: UvrABC system protein C (647 aa).

The GIY-YIG domain maps to 16 to 95; sequence VEPGVYRFRD…IKEFDPRFNV (80 aa). A UVR domain is found at 208–243; the sequence is DRFARELEQQMNAAAAELDFERAARLRDDLGALKRA.

This sequence belongs to the UvrC family. In terms of assembly, interacts with UvrB in an incision complex.

The protein resides in the cytoplasm. Its function is as follows. The UvrABC repair system catalyzes the recognition and processing of DNA lesions. UvrC both incises the 5' and 3' sides of the lesion. The N-terminal half is responsible for the 3' incision and the C-terminal half is responsible for the 5' incision. This is UvrABC system protein C from Mycolicibacterium paratuberculosis (strain ATCC BAA-968 / K-10) (Mycobacterium paratuberculosis).